The sequence spans 545 residues: CTP synthase (545 aa).

The amidoligase domain stretch occupies residues 1–266; the sequence is MTTNYIFVTG…DDYICKRFSL (266 aa). Residue S14 participates in CTP binding. S14 contacts UTP. ATP is bound by residues 15 to 20 and D72; that span reads SLGKGI. D72 and E140 together coordinate Mg(2+). CTP contacts are provided by residues 147 to 149, 187 to 192, and K223; these read DIE and KTKPTQ. UTP is bound by residues 187-192 and K223; that span reads KTKPTQ. ATP is bound at residue 239 to 241; it reads KDV. Residues 291–542 form the Glutamine amidotransferase type-1 domain; that stretch reads TIGMIGKYVE…VKAAGEYQKR (252 aa). G352 is an L-glutamine binding site. The Nucleophile; for glutamine hydrolysis role is filled by C379. L-glutamine-binding positions include 380 to 383, E403, and R470; that span reads LGMQ. Active-site residues include H515 and E517.

This sequence belongs to the CTP synthase family. As to quaternary structure, homotetramer.

The enzyme catalyses UTP + L-glutamine + ATP + H2O = CTP + L-glutamate + ADP + phosphate + 2 H(+). The catalysed reaction is L-glutamine + H2O = L-glutamate + NH4(+). It catalyses the reaction UTP + NH4(+) + ATP = CTP + ADP + phosphate + 2 H(+). It participates in pyrimidine metabolism; CTP biosynthesis via de novo pathway; CTP from UDP: step 2/2. With respect to regulation, allosterically activated by GTP, when glutamine is the substrate; GTP has no effect on the reaction when ammonia is the substrate. The allosteric effector GTP functions by stabilizing the protein conformation that binds the tetrahedral intermediate(s) formed during glutamine hydrolysis. Inhibited by the product CTP, via allosteric rather than competitive inhibition. Functionally, catalyzes the ATP-dependent amination of UTP to CTP with either L-glutamine or ammonia as the source of nitrogen. Regulates intracellular CTP levels through interactions with the four ribonucleotide triphosphates. The chain is CTP synthase from Yersinia enterocolitica serotype O:8 / biotype 1B (strain NCTC 13174 / 8081).